The following is a 109-amino-acid chain: Thioredoxin 1 (109 aa).

The 108-residue stretch at 2–109 folds into the Thioredoxin domain; the sequence is SDKIIHLTDD…LKEFLDANLA (108 aa). Catalysis depends on nucleophile residues cysteine 33 and cysteine 36. The cysteines at positions 33 and 36 are disulfide-linked. Lysine 70 is subject to N6-acetyllysine.

This sequence belongs to the thioredoxin family. As to quaternary structure, monomer.

In terms of biological role, participates in various redox reactions through the reversible oxidation of its active center dithiol to a disulfide and catalyzes dithiol-disulfide exchange reactions. The polypeptide is Thioredoxin 1 (trxA) (Escherichia coli O157:H7).